A 463-amino-acid chain; its full sequence is Sporulation-specific protein 22 (463 aa).

Positions 1-25 (MNRITRKSCLFAIIFASLFVTHALG) are cleaved as a signal peptide. LRR repeat units lie at residues 127-147 (SPEL…LFQL), 185-206 (IEII…NFNK), 207-233 (VQEI…TIRG), 251-275 (LREV…KVKS), and 302-325 (INNV…LMIA). 3 N-linked (GlcNAc...) asparagine glycosylation sites follow: Asn256, Asn314, and Asn327. Residue Asn440 is the site of GPI-anchor amidated asparagine attachment. The propeptide at 441-463 (SANPSMQLDPLLFGTCLVAMLLF) is removed in mature form.

This sequence belongs to the SPS2 family.

The protein localises to the cell membrane. In terms of biological role, redundant with SPS2 for the organization of the beta-glucan layer of the spore wall. The protein is Sporulation-specific protein 22 (SPS22) of Saccharomyces cerevisiae (strain ATCC 204508 / S288c) (Baker's yeast).